We begin with the raw amino-acid sequence, 230 residues long: Large ribosomal subunit protein uL1 (230 aa).

The protein belongs to the universal ribosomal protein uL1 family. In terms of assembly, part of the 50S ribosomal subunit.

Its function is as follows. Binds directly to 23S rRNA. The L1 stalk is quite mobile in the ribosome, and is involved in E site tRNA release. Functionally, protein L1 is also a translational repressor protein, it controls the translation of the L11 operon by binding to its mRNA. This chain is Large ribosomal subunit protein uL1, found in Bacillus cereus (strain B4264).